The primary structure comprises 464 residues: MQTLMSHSRITPLPGAITKEEIKNQLLVHERRFLSKPNRKDQWNVLPQSAHSKNTVNPVRKIADACAVPPHPEKKVIKLHLGDPSVGGKLPPSEIAVQAMHESVSSHMFDGYGPAVGALAAREAIVERYSSADNVFTADDVVLASGCSHALQMAIEAVANAGENILVPHPGFPLYSTLCRPHNIVDKPYKIDMTGEDVRIDLSYMATIIDDNTKAIIVNNPGNPTGGVFTKEHLEEILAFAHQYKLIIIADEIYGDLVYNGATFYPLASLSPKVPIITCDGIAKRWMVPGWRLGWLIIHNHFGVLTDVKNGIVALSQKIVGPCSLVQGALPKILRETPEDYFVYTRNVIETNANIVDSILADVPGMRVVKPKGAMYMMVNISRTAYGSDVSFCQNLIREESVFCLPGQAFSAPGYFRVVLTCGSEDMEEAALRIREFCYRNFNQHSDSEDSSDEGLDLSAMESD.

An N6-(pyridoxal phosphate)lysine modification is found at K284.

It belongs to the class-I pyridoxal-phosphate-dependent aminotransferase family. Homodimer. The cofactor is pyridoxal 5'-phosphate. As to expression, expressed in the muscle. Expressed in the hypodermis and intestine.

The enzyme catalyses L-tyrosine + 2-oxoglutarate = 3-(4-hydroxyphenyl)pyruvate + L-glutamate. It carries out the reaction 3-hydroxy-L-phenylalanine + 2-oxoglutarate = 3-(3-hydroxyphenyl)pyruvate + L-glutamate. Its pathway is amino-acid degradation; L-phenylalanine degradation; acetoacetate and fumarate from L-phenylalanine: step 2/6. In terms of biological role, transaminase involved in tyrosine breakdown. Converts tyrosine to p-hydroxyphenylpyruvate. Has no transaminase activity towards phenylalanine. Plays protective role against oxidative stress, metabolizing meta-tyrosine and negatively regulating its accumulation. Plays a role in modulating the daf-2/insulin receptor-like transduction pathway through regulating tyrosine levels. Negatively regulates dauer formation. Plays a role in longevity. The polypeptide is Tyrosine aminotransferase (Caenorhabditis elegans).